A 339-amino-acid chain; its full sequence is Phenylalanine--tRNA ligase alpha subunit (339 aa).

Glu250 is a binding site for Mg(2+).

It belongs to the class-II aminoacyl-tRNA synthetase family. Phe-tRNA synthetase alpha subunit type 1 subfamily. In terms of assembly, tetramer of two alpha and two beta subunits. Mg(2+) serves as cofactor.

It localises to the cytoplasm. It carries out the reaction tRNA(Phe) + L-phenylalanine + ATP = L-phenylalanyl-tRNA(Phe) + AMP + diphosphate + H(+). The chain is Phenylalanine--tRNA ligase alpha subunit from Azobacteroides pseudotrichonymphae genomovar. CFP2.